The sequence spans 303 residues: Glycine--tRNA ligase alpha subunit (303 aa).

Belongs to the class-II aminoacyl-tRNA synthetase family. Tetramer of two alpha and two beta subunits.

The protein resides in the cytoplasm. The catalysed reaction is tRNA(Gly) + glycine + ATP = glycyl-tRNA(Gly) + AMP + diphosphate. This chain is Glycine--tRNA ligase alpha subunit, found in Methylobacterium radiotolerans (strain ATCC 27329 / DSM 1819 / JCM 2831 / NBRC 15690 / NCIMB 10815 / 0-1).